The following is a 499-amino-acid chain: Chitinase B (499 aa).

An N-terminal signal peptide occupies residues 1-41 (MSTRKAVIGYYFIPTNQINNYTETDTSVVPFPVSNITPAKA). The GH18 domain maps to 42–425 (KQLTHINFSF…AALDRYFNAA (384 aa)). Chitin is bound by residues 68–69 (DA) and 95–98 (GGWY). Residue glutamate 144 is the Proton donor of the active site. Residues tyrosine 145, 212-215 (MTYD), and tryptophan 403 contribute to the chitin site. Positions 438–498 (LRYTGVGPGN…DSAWLKVGRL (61 aa)) constitute a Chitin-binding type-3 domain.

This sequence belongs to the glycosyl hydrolase 18 family. Chitinase class II subfamily.

The catalysed reaction is Random endo-hydrolysis of N-acetyl-beta-D-glucosaminide (1-&gt;4)-beta-linkages in chitin and chitodextrins.. The protein is Chitinase B (chiB) of Serratia marcescens.